The following is a 111-amino-acid chain: Urease subunit beta (111 aa).

Belongs to the urease beta subunit family. Heterotrimer of UreA (gamma), UreB (beta) and UreC (alpha) subunits. Three heterotrimers associate to form the active enzyme.

Its subcellular location is the cytoplasm. It carries out the reaction urea + 2 H2O + H(+) = hydrogencarbonate + 2 NH4(+). It participates in nitrogen metabolism; urea degradation; CO(2) and NH(3) from urea (urease route): step 1/1. The chain is Urease subunit beta from Geobacillus kaustophilus (strain HTA426).